The chain runs to 123 residues: Large ribosomal subunit protein uL14 (123 aa).

Belongs to the universal ribosomal protein uL14 family. As to quaternary structure, part of the 50S ribosomal subunit. Forms a cluster with proteins L3 and L19. In the 70S ribosome, L14 and L19 interact and together make contacts with the 16S rRNA in bridges B5 and B8.

Functionally, binds to 23S rRNA. Forms part of two intersubunit bridges in the 70S ribosome. The protein is Large ribosomal subunit protein uL14 of Photorhabdus laumondii subsp. laumondii (strain DSM 15139 / CIP 105565 / TT01) (Photorhabdus luminescens subsp. laumondii).